The primary structure comprises 329 residues: Lipoyl synthase (329 aa).

Residues Cys55, Cys60, Cys66, Cys81, Cys85, Cys88, and Ser292 each coordinate [4Fe-4S] cluster. In terms of domain architecture, Radical SAM core spans 67-281 (WEDREATFLI…KAEAEAIGFL (215 aa)).

The protein belongs to the radical SAM superfamily. Lipoyl synthase family. [4Fe-4S] cluster is required as a cofactor.

The protein resides in the cytoplasm. It catalyses the reaction [[Fe-S] cluster scaffold protein carrying a second [4Fe-4S](2+) cluster] + N(6)-octanoyl-L-lysyl-[protein] + 2 oxidized [2Fe-2S]-[ferredoxin] + 2 S-adenosyl-L-methionine + 4 H(+) = [[Fe-S] cluster scaffold protein] + N(6)-[(R)-dihydrolipoyl]-L-lysyl-[protein] + 4 Fe(3+) + 2 hydrogen sulfide + 2 5'-deoxyadenosine + 2 L-methionine + 2 reduced [2Fe-2S]-[ferredoxin]. Its pathway is protein modification; protein lipoylation via endogenous pathway; protein N(6)-(lipoyl)lysine from octanoyl-[acyl-carrier-protein]: step 2/2. Catalyzes the radical-mediated insertion of two sulfur atoms into the C-6 and C-8 positions of the octanoyl moiety bound to the lipoyl domains of lipoate-dependent enzymes, thereby converting the octanoylated domains into lipoylated derivatives. The sequence is that of Lipoyl synthase from Clavibacter sepedonicus (Clavibacter michiganensis subsp. sepedonicus).